The chain runs to 225 residues: Methyl-CpG-binding domain-containing protein 6 (225 aa).

Residues 25–92 (GDGTLDSSAK…PGWRVEDKIR (68 aa)) form a disordered region. One can recognise an MBD domain in the interval 71–146 (RKRAAPGDNW…ENTYFNPDHF (76 aa)).

In terms of assembly, homodimer and heterodimer with MBD5. Interacts with DDM1 via its MBD domain. Interacts with NTF2, RPS2C, HDA6 and AGO4. In terms of tissue distribution, expressed in rosette leaves, buds, flowers, stems, mature seeds and roots.

It is found in the nucleus. It localises to the chromosome. The protein localises to the nucleolus. Its function is as follows. Transcriptional regulator that binds CpG, CpNpN and CpNpG (N is A, T, or C) islands in promoters regardless the DNA methylation status. Plays probably a role in gene silencing. May associate with histone deacetylase proteins (HDAC). Required for nucleolar dominance that consist in the silencing of rRNA genes inherited from one progenitor in genetic hybrids. Recruited to rRNA genes in a DRM2-dependent manner. Maintains gene silencing by interacting with RNA binding proteins (e.g. NTF2, RPS2C, HDA6 and AGO4) and by regulating DNA methylation status. The protein is Methyl-CpG-binding domain-containing protein 6 of Arabidopsis thaliana (Mouse-ear cress).